We begin with the raw amino-acid sequence, 110 residues long: MDQFECINVEEAHQKMHQGKAVLVDIRDPQSYAMGHTPGAFHLTNDTLGTFMRDNDFETPVMVMCYHGNSSKGAAQYLLQQGYDAVYSVDGGFDAWHRHFPAEVEHAFGG.

The Rhodanese domain maps to 17-105 (HQGKAVLVDI…WHRHFPAEVE (89 aa)). C65 acts as the Cysteine persulfide intermediate in catalysis.

Belongs to the GlpE family.

It is found in the cytoplasm. The enzyme catalyses thiosulfate + hydrogen cyanide = thiocyanate + sulfite + 2 H(+). The catalysed reaction is thiosulfate + [thioredoxin]-dithiol = [thioredoxin]-disulfide + hydrogen sulfide + sulfite + 2 H(+). Functionally, transferase that catalyzes the transfer of sulfur from thiosulfate to thiophilic acceptors such as cyanide or dithiols. May function in a CysM-independent thiosulfate assimilation pathway by catalyzing the conversion of thiosulfate to sulfite, which can then be used for L-cysteine biosynthesis. This is Thiosulfate sulfurtransferase GlpE from Enterobacter sp. (strain 638).